The following is a 432-amino-acid chain: 3-phosphoshikimate 1-carboxyvinyltransferase (432 aa).

3-phosphoshikimate-binding residues include Lys23, Ser24, and Arg28. Lys23 is a binding site for phosphoenolpyruvate. Residues Gly95 and Arg123 each contribute to the phosphoenolpyruvate site. Positions 167, 169, 317, and 344 each coordinate 3-phosphoshikimate. Residue Gln169 coordinates phosphoenolpyruvate. Asp317 functions as the Proton acceptor in the catalytic mechanism. 2 residues coordinate phosphoenolpyruvate: Arg348 and Arg390.

This sequence belongs to the EPSP synthase family. In terms of assembly, monomer.

Its subcellular location is the cytoplasm. The catalysed reaction is 3-phosphoshikimate + phosphoenolpyruvate = 5-O-(1-carboxyvinyl)-3-phosphoshikimate + phosphate. It functions in the pathway metabolic intermediate biosynthesis; chorismate biosynthesis; chorismate from D-erythrose 4-phosphate and phosphoenolpyruvate: step 6/7. In terms of biological role, catalyzes the transfer of the enolpyruvyl moiety of phosphoenolpyruvate (PEP) to the 5-hydroxyl of shikimate-3-phosphate (S3P) to produce enolpyruvyl shikimate-3-phosphate and inorganic phosphate. The polypeptide is 3-phosphoshikimate 1-carboxyvinyltransferase (Staphylococcus aureus (strain Newman)).